The primary structure comprises 102 residues: uncharacterized protein (102 aa).

The next 3 helical transmembrane spans lie at 1-21 (MVPL…LRPV), 42-62 (SIID…LILV), and 68-88 (SIHA…FSIV).

Its subcellular location is the membrane. This is an uncharacterized protein from Saccharomyces cerevisiae (strain ATCC 204508 / S288c) (Baker's yeast).